We begin with the raw amino-acid sequence, 78 residues long: Protein DsvD (78 aa).

To A.fulgidus DsrD.

Functionally, may play an essential role in dissimilatory sulfite reduction. This is Protein DsvD (dsvD) from Nitratidesulfovibrio vulgaris (strain ATCC 29579 / DSM 644 / CCUG 34227 / NCIMB 8303 / VKM B-1760 / Hildenborough) (Desulfovibrio vulgaris).